The following is a 252-amino-acid chain: Large ribosomal subunit protein uL10m (252 aa).

The N-terminal 24 residues, 1-24, are a transit peptide targeting the mitochondrion; the sequence is MAATLCCRLLPKAGWVPLTQSVRH.

Belongs to the universal ribosomal protein uL10 family. Component of the mitochondrial ribosome large subunit (39S) which comprises a 16S rRNA and about 50 distinct proteins.

It is found in the mitochondrion. The chain is Large ribosomal subunit protein uL10m (mrpl10) from Danio rerio (Zebrafish).